A 78-amino-acid polypeptide reads, in one-letter code: MSKICQVTGKKPVVGNNVSHSHRKTRRRFLPNLQTHRFWVENENRFVKLRLSTSGMRIIDKNGIESVLAEMRARGEKV.

Belongs to the bacterial ribosomal protein bL28 family.

This Hydrogenovibrio crunogenus (strain DSM 25203 / XCL-2) (Thiomicrospira crunogena) protein is Large ribosomal subunit protein bL28.